Here is a 291-residue protein sequence, read N- to C-terminus: Tyrosine-protein kinase PtkA (291 aa).

Residues 1 to 79 (MSSPRERRPA…RRASSPGESP (79 aa)) are disordered. Residues 23-60 (HQTSRSSPDTTAPTGSGLSNRFVNDNGIVTDTTASGTN) show a composition bias toward polar residues. Tyrosine 262 carries the post-translational modification Phosphotyrosine.

This sequence belongs to the HAD-like hydrolase superfamily. CbbY/CbbZ/Gph/YieH family. Interacts with PtpA. In terms of processing, autophosphorylated.

The enzyme catalyses L-tyrosyl-[protein] + ATP = O-phospho-L-tyrosyl-[protein] + ADP + H(+). Functionally, required for growth within macrophages. Catalyzes the phosphorylation of PtpA on the tyrosine residues at positions 128 and 129, thereby increasing PtpA phosphatase activity and promoting pathogenicity. The polypeptide is Tyrosine-protein kinase PtkA (Mycobacterium bovis (strain ATCC BAA-935 / AF2122/97)).